We begin with the raw amino-acid sequence, 541 residues long: MCISLHLTVYRSNKCLLLIFIIPISWNLLIKNILFAFGLSSVLWLAKTIIHLLSSLNSSQVMIYSSYYMMGETFVNRFMYMMLGFISSMVLLIMSSDGLSLMLGWDGLGITSYLLIMFYKNYNSSSSGMITILSNRVGDVLILWSLGLMFYSKSWDYMFLSYFSLSIMLLFILSSFTKSAQLPFSAWLPAAMAAPTPVSSLVHSSTLVTAGIYLMIRLSPSFEESGCFLLVVMGALTSFFSGLAAFGENDLKRVIALSTLSQLGVMMFSLGLGLTLFCYFHLFAHALFKALLFMCSGVVIHSLGVQDNRRMGGVSSMLPYTSYIILVCSLSLMGFPYLSGFFSKDLIIESSESLCMLFPSVLMLVSCLLTSTYSSRIAMVCLCSYNYNLSCQYSDEEGEYLTPLFVLYWGAVMGGYIFLLMFSGGDVSIILGPLKSFLLLSLITVGVILPYFVKSFSLSLSHYVSSMMFLPFITGRTSFMPLLMGELLYHEGDCGWVEEAGPSLIHHNSLRGSSLFSFLTSSPYKVLILSSLLFTLFMYFY.

16 helical membrane-spanning segments follow: residues 17–37 (LLIF…LFAF), 48–70 (TIIH…YYMM), 74–94 (FVNR…LLIM), 98–118 (GLSL…LIMF), 130–150 (ITIL…GLMF), 157–177 (YMFL…SSFT), 191–213 (AMAA…AGIY), 226–246 (GCFL…LAAF), 263–283 (LGVM…FHLF), 285–305 (HALF…SLGV), 322–342 (SYII…SGFF), 353–373 (SLCM…TSTY), 404–424 (LFVL…MFSG), 429–449 (IILG…GVIL), 455–475 (SFSL…FITG), and 518–538 (FLTS…TLFM).

The protein belongs to the complex I subunit 5 family.

The protein resides in the mitochondrion inner membrane. It carries out the reaction a ubiquinone + NADH + 5 H(+)(in) = a ubiquinol + NAD(+) + 4 H(+)(out). Functionally, core subunit of the mitochondrial membrane respiratory chain NADH dehydrogenase (Complex I) that is believed to belong to the minimal assembly required for catalysis. Complex I functions in the transfer of electrons from NADH to the respiratory chain. The immediate electron acceptor for the enzyme is believed to be ubiquinone. The polypeptide is NADH-ubiquinone oxidoreductase chain 5 (ND5) (Artemia franciscana (Brine shrimp)).